Here is a 306-residue protein sequence, read N- to C-terminus: Protein YIPF1 (306 aa).

Topologically, residues 1-119 are cytoplasmic; sequence MAAVDDLQFE…VRLYIRSNPD (119 aa). Residues 14 to 62 are disordered; it reads NAATSLTANPDATTVNIEDPGETPKHQPGSPRGSGREEDDELLGNDDSD. Positions 15–29 are enriched in polar residues; the sequence is AATSLTANPDATTVN. The segment covering 50–59 has biased composition (acidic residues); it reads EEDDELLGND. The helical transmembrane segment at 120-140 threads the bilayer; the sequence is LYGPFWICATLVFAIAISGNL. At 141 to 162 the chain is on the lumenal side; that stretch reads SNFLIHLGEKTYHYVPEFRKVS. The helical transmembrane segment at 163-183 threads the bilayer; that stretch reads IAATIIYAYAWLVPLALWGFL. Over 184–200 the chain is Cytoplasmic; that stretch reads MWRNSKVMNIVSYSFLE. The helical transmembrane segment at 201-221 threads the bilayer; sequence IVCVYGYSLFIYIPTAILWII. The Lumenal segment spans residues 222–227; sequence PQKAVR. A helical membrane pass occupies residues 228 to 248; sequence WILVMIALGISGSLLAMTFWP. Residues 249–256 are Cytoplasmic-facing; the sequence is AVREDNRR. Residues 257-277 form a helical membrane-spanning segment; that stretch reads VALATIVTIVLLHMLLSVGCL. The Lumenal segment spans residues 278–306; sequence AYFFDAPEMDHLPTTTATPNQTVAAAKSS. N-linked (GlcNAc...) asparagine glycosylation occurs at asparagine 297.

The protein belongs to the YIP1 family. Interacts with YIPF6; this interaction may stabilize YIPF1. May also form a ternary complex with YIPF2 and YIPF6.

It is found in the golgi apparatus. The protein localises to the cis-Golgi network membrane. The protein resides in the trans-Golgi network membrane. It localises to the late endosome membrane. The chain is Protein YIPF1 (YIPF1) from Homo sapiens (Human).